Here is a 501-residue protein sequence, read N- to C-terminus: MLO-like protein 5 (501 aa).

Over 1-22 (MAGGGGGSTSGEGPRELDQTPT) the chain is Extracellular. A helical membrane pass occupies residues 23 to 43 (WAVSTVCGVIILISIVLELMI). Over 44–68 (HKIGEVFTERRKKALYEALQKIKNE) the chain is Cytoplasmic. Residues 69–89 (LMVLGFISLLLTFGQNYIASL) traverse the membrane as a helical segment. The Extracellular portion of the chain corresponds to 90 to 151 (CVASRYGHAM…ISLNALHQVH (62 aa)). The helical transmembrane segment at 152 to 172 (IFIFFLAVFHVIYSAITMMLG) threads the bilayer. Topologically, residues 173 to 273 (RAKIRGWKVW…IKRSLEDDFK (101 aa)) are cytoplasmic. The helical transmembrane segment at 274–294 (VVVGISPELWAFVMLFLLFDV) threads the bilayer. His295 is a topological domain (extracellular). Residues 296–316 (GWYVTAVITMIPPLLTLAIGT) traverse the membrane as a helical segment. Over 317–359 (KLQAIISDMALEIQERHAVIQGMPLVNVSDRHFWFSRPALVLH) the chain is Cytoplasmic. Residues 360 to 380 (IIHFILFQNAFEITYFFWIWY) form a helical membrane-spanning segment. Residues 381–391 (EFGLRSCFHHH) are Extracellular-facing. The helical transmembrane segment at 392–412 (FALIIIRVALGVGVQFLCSYI) threads the bilayer. Residues 413-501 (TLPLYALVTQ…SQSRDLLSGP (89 aa)) lie on the Cytoplasmic side of the membrane. Positions 443 to 501 (WHKNAKKKSETPGQTQPPLPNLRPKTGGDIESASPANITASVDVKESDQSQSRDLLSGP) are disordered. Residues 450–471 (KSETPGQTQPPLPNLRPKTGGD) form a calmodulin-binding region. The span at 491 to 501 (QSQSRDLLSGP) shows a compositional bias: polar residues.

Belongs to the MLO family.

The protein localises to the membrane. Functionally, may be involved in modulation of pathogen defense and leaf cell death. Activity seems to be regulated by Ca(2+)-dependent calmodulin binding and seems not to require heterotrimeric G proteins. The protein is MLO-like protein 5 (MLO5) of Arabidopsis thaliana (Mouse-ear cress).